A 194-amino-acid polypeptide reads, in one-letter code: ATP-dependent Clp protease proteolytic subunit 3 (194 aa).

Serine 96 serves as the catalytic Nucleophile. Residue histidine 121 is part of the active site.

The protein belongs to the peptidase S14 family. In terms of assembly, fourteen ClpP subunits assemble into 2 heptameric rings which stack back to back to give a disk-like structure with a central cavity, resembling the structure of eukaryotic proteasomes.

It localises to the cytoplasm. It catalyses the reaction Hydrolysis of proteins to small peptides in the presence of ATP and magnesium. alpha-casein is the usual test substrate. In the absence of ATP, only oligopeptides shorter than five residues are hydrolyzed (such as succinyl-Leu-Tyr-|-NHMec, and Leu-Tyr-Leu-|-Tyr-Trp, in which cleavage of the -Tyr-|-Leu- and -Tyr-|-Trp bonds also occurs).. In terms of biological role, cleaves peptides in various proteins in a process that requires ATP hydrolysis. Has a chymotrypsin-like activity. Plays a major role in the degradation of misfolded proteins. This Prochlorococcus marinus (strain NATL2A) protein is ATP-dependent Clp protease proteolytic subunit 3.